Here is a 129-residue protein sequence, read N- to C-terminus: Glycine cleavage system H protein (129 aa).

Residues 24–106 (TYTVGITEHA…YVGGWIFKIK (83 aa)) form the Lipoyl-binding domain. Lys-65 is subject to N6-lipoyllysine.

Belongs to the GcvH family. As to quaternary structure, the glycine cleavage system is composed of four proteins: P, T, L and H. (R)-lipoate serves as cofactor.

Functionally, the glycine cleavage system catalyzes the degradation of glycine. The H protein shuttles the methylamine group of glycine from the P protein to the T protein. The protein is Glycine cleavage system H protein of Salmonella paratyphi B (strain ATCC BAA-1250 / SPB7).